Consider the following 316-residue polypeptide: Thiamine-monophosphate kinase (316 aa).

Mg(2+) contacts are provided by aspartate 26, threonine 49, and aspartate 50. Substrate is bound at residue aspartate 57. Aspartate 79 serves as a coordination point for Mg(2+). ATP is bound by residues tyrosine 109, 126–127 (GD), and arginine 151. Aspartate 127 lines the Mg(2+) pocket. Aspartate 198 contributes to the Mg(2+) binding site. Residue serine 200 coordinates ATP. Aspartate 201 is a Mg(2+) binding site. Positions 251 and 305 each coordinate substrate.

This sequence belongs to the thiamine-monophosphate kinase family.

It catalyses the reaction thiamine phosphate + ATP = thiamine diphosphate + ADP. The protein operates within cofactor biosynthesis; thiamine diphosphate biosynthesis; thiamine diphosphate from thiamine phosphate: step 1/1. Its function is as follows. Catalyzes the ATP-dependent phosphorylation of thiamine-monophosphate (TMP) to form thiamine-pyrophosphate (TPP), the active form of vitamin B1. This is Thiamine-monophosphate kinase from Rhodopirellula baltica (strain DSM 10527 / NCIMB 13988 / SH1).